The chain runs to 452 residues: Maltoporin (452 aa).

An N-terminal signal peptide occupies residues Met-1 to Ala-25.

Belongs to the porin LamB (TC 1.B.3) family. Homotrimer formed of three 18-stranded antiparallel beta-barrels, containing three independent channels.

It localises to the cell outer membrane. It catalyses the reaction beta-maltose(in) = beta-maltose(out). In terms of biological role, involved in the transport of maltose and maltodextrins. This chain is Maltoporin, found in Salmonella enteritidis PT4 (strain P125109).